The chain runs to 228 residues: 2,3-bisphosphoglycerate-dependent phosphoglycerate mutase (228 aa).

Substrate is bound by residues R8–N15, T21–G22, R60, E87–Y90, K98, R114–R115, and G183–N184. Residue H9 is the Tele-phosphohistidine intermediate of the active site. E87 functions as the Proton donor/acceptor in the catalytic mechanism.

It belongs to the phosphoglycerate mutase family. BPG-dependent PGAM subfamily. In terms of assembly, homodimer.

The enzyme catalyses (2R)-2-phosphoglycerate = (2R)-3-phosphoglycerate. It participates in carbohydrate degradation; glycolysis; pyruvate from D-glyceraldehyde 3-phosphate: step 3/5. Catalyzes the interconversion of 2-phosphoglycerate and 3-phosphoglycerate. The sequence is that of 2,3-bisphosphoglycerate-dependent phosphoglycerate mutase from Rhodospirillum centenum (strain ATCC 51521 / SW).